A 193-amino-acid polypeptide reads, in one-letter code: Ribose 1,5-bisphosphate phosphokinase PhnN (193 aa).

ATP is bound at residue 9–16 (GPSGAGKD).

It belongs to the ribose 1,5-bisphosphokinase family.

The enzyme catalyses alpha-D-ribose 1,5-bisphosphate + ATP = 5-phospho-alpha-D-ribose 1-diphosphate + ADP. Its pathway is metabolic intermediate biosynthesis; 5-phospho-alpha-D-ribose 1-diphosphate biosynthesis; 5-phospho-alpha-D-ribose 1-diphosphate from D-ribose 5-phosphate (route II): step 3/3. Functionally, catalyzes the phosphorylation of ribose 1,5-bisphosphate to 5-phospho-D-ribosyl alpha-1-diphosphate (PRPP). In Yersinia pestis, this protein is Ribose 1,5-bisphosphate phosphokinase PhnN.